The sequence spans 183 residues: Adenine phosphoribosyltransferase (183 aa).

Belongs to the purine/pyrimidine phosphoribosyltransferase family. As to quaternary structure, homodimer.

It localises to the cytoplasm. It catalyses the reaction AMP + diphosphate = 5-phospho-alpha-D-ribose 1-diphosphate + adenine. The protein operates within purine metabolism; AMP biosynthesis via salvage pathway; AMP from adenine: step 1/1. Catalyzes a salvage reaction resulting in the formation of AMP, that is energically less costly than de novo synthesis. In Salmonella typhi, this protein is Adenine phosphoribosyltransferase.